Reading from the N-terminus, the 269-residue chain is MQELIACVDHLRFDLELAVEQQLGAQPLPFPGMDKSGAAVCEFFLKSACGKGGMCPFRHISGEKTVVCKHWLRGLCKKGDQCEFLHEYDMTKMPECYFYSKFGECSNKECPFLHIDPESKIKDCPWYDRGFCKHGPLCRHRHTRRVICVNYLVGFCIEGPNCKFMHPRFELPMGTAEQPPLPQQTQNQQKQNNNQVLQRSSSLIQLTSQNSPVSQQRSPQTIGVMQLQSGTQGNRGPRPLDQVTCYKCGEKGHYANRCTKGHLAFLSGQ.

C3H1-type zinc fingers lie at residues 35-61 (KSGA…RHIS), 62-89 (GEKT…HEYD), 90-117 (MTKM…HIDP), 118-145 (ESKI…HTRR), and 146-169 (VICV…HPRF). A disordered region spans residues 173–197 (MGTAEQPPLPQQTQNQQKQNNNQVL). The span at 183-197 (QQTQNQQKQNNNQVL) shows a compositional bias: low complexity. Residues 243-260 (VTCYKCGEKGHYANRCTK) form a CCHC-type zinc finger.

Belongs to the CPSF4/YTH1 family. As to quaternary structure, component of the cleavage and polyadenylation specificity factor (CPSF) complex, composed of cpsf1, cpsf2, cpsf3, cpsf4 and fip1l1.

The protein localises to the nucleus. Component of the cleavage and polyadenylation specificity factor (CPSF) complex that play a key role in pre-mRNA 3'-end formation, recognizing the AAUAAA signal sequence and interacting with poly(A) polymerase and other factors to bring about cleavage and poly(A) addition. Cpsf4 binds RNA polymers with a preference for poly(U). The protein is Cleavage and polyadenylation specificity factor subunit 4 (cpsf4) of Xenopus laevis (African clawed frog).